The primary structure comprises 206 residues: Small ribosomal subunit protein uS4 (206 aa).

The S4 RNA-binding domain maps to 96-156 (GRLDNVVYRM…EKSKKQARIK (61 aa)).

Belongs to the universal ribosomal protein uS4 family. In terms of assembly, part of the 30S ribosomal subunit. Contacts protein S5. The interaction surface between S4 and S5 is involved in control of translational fidelity.

Its function is as follows. One of the primary rRNA binding proteins, it binds directly to 16S rRNA where it nucleates assembly of the body of the 30S subunit. Functionally, with S5 and S12 plays an important role in translational accuracy. The sequence is that of Small ribosomal subunit protein uS4 from Pasteurella multocida (strain Pm70).